Reading from the N-terminus, the 674-residue chain is MAPGQAPHQATPWRDAHPFFLLSPVMGLLSRAWSRLRGLGPLEPWLVEAVKGAALVEAGLEGEARTPLAIPHTPWGRRPEEEAEDSGGPGEDRETLGLKTSSSLPEAWGLLDDDDGMYGEREATSVPRGQGSQFADGQRAPLSPSLLIRTLQGSDKNPGEEKAEEEGVAEEEGVNKFSYPPSHRECCPAVEEEDDEEAVKKEAHRTSTSALSPGSKPSTWVSCPGEEENQATEDKRTERSKGARKTSVSPRSSGSDPRSWEYRSGEASEEKEEKAHKETGKGEAAPGPQSSAPAQRPQLKSWWCQPSDEEEGEVKALGAAEKDGEAECPPCIPPPSAFLKAWVYWPGEDTEEEEDEEEDEDSDSGSDEEEGEAEASSSTPATGVFLKSWVYQPGEDTEEEEDEDSDTGSAEDEREAETSASTPPASAFLKAWVYRPGEDTEEEEDEDVDSEDKEDDSEAALGEAESDPHPSHPDQRAHFRGWGYRPGKETEEEEAAEDWGEAEPCPFRVAIYVPGEKPPPPWAPPRLPLRLQRRLKRPETPTHDPDPETPLKARKVRFSEKVTVHFLAVWAGPAQAARQGPWEQLARDRSRFARRITQAQEELSPCLTPAARARAWARLRNPPLAPIPALTQTLPSSSVPSSPVQTTPLSQAVATPSRSSAAAAAALDLSGRRG.

Over methionine 1–leucine 21 the chain is Cytoplasmic. The segment at methionine 1–leucine 60 is required for localization in the endoplasmic reticulum. Positions leucine 22–leucine 39 form an intramembrane region, helical. Topologically, residues glycine 40–glycine 674 are cytoplasmic. The segment at arginine 65–proline 504 is disordered. Residue serine 143 is modified to Phosphoserine. The segment covering lysine 162 to glutamate 172 has biased composition (acidic residues). Residues threonine 206–valine 221 show a composition bias toward polar residues. The segment covering threonine 232–lysine 241 has biased composition (basic and acidic residues). The span at threonine 246 to aspartate 256 shows a compositional bias: polar residues. A compositionally biased stretch (basic and acidic residues) spans arginine 258–lysine 281. Position 262 is a phosphotyrosine (tyrosine 262). Over residues glycine 282–glutamine 298 the composition is skewed to low complexity. Repeat copies occupy residues alanine 337–glutamate 369, valine 384–glutamate 417, alanine 427–alanine 460, and alanine 477–alanine 510. The interval alanine 337–alanine 510 is 4 X 34 AA approximate repeats. The interaction with SMAD7 stretch occupies residues alanine 337–alanine 510. Acidic residues predominate over residues glutamate 348 to alanine 373. Tyrosine 391 is modified (phosphotyrosine). Acidic residues predominate over residues glutamate 395–glutamate 415. Over residues threonine 418–alanine 427 the composition is skewed to low complexity. Tyrosine 434 bears the Phosphotyrosine mark. Positions aspartate 439–glutamate 458 are enriched in acidic residues. Basic and acidic residues predominate over residues serine 466 to alanine 477. The interaction with KMT2A/MLL1 stretch occupies residues glycine 483 to lysine 555. Positions threonine 490–glutamate 501 are enriched in acidic residues. Residue tyrosine 512 is modified to Phosphotyrosine. Disordered regions lie at residues arginine 534–arginine 554 and alanine 625–glycine 674. The interval lysine 536–glutamate 583 is interaction with SMARCB1. The segment covering arginine 537–arginine 554 has biased composition (basic and acidic residues). Over residues leucine 630–alanine 666 the composition is skewed to low complexity.

Belongs to the PPP1R15 family. As to quaternary structure, interacts with PPP1CA. Interacts with EIF2S1. Interacts with PCNA. Interacts with LYN and KMT2A/MLL1. Interacts with PPP1R1A and SMARCB1. Interacts with SMAD7. Interacts with BAG1. Interacts with NOX4. (Microbial infection) Interacts with enterovirus 71/EV71 non-structural protein precursor 3CD; this interaction promotes EV71 replication. Post-translationally, phosphorylated at multiple Ser/Thr residues. Phosphorylated on tyrosine by LYN; which impairs its antiproliferative activity. Phosphorylation at Tyr-262 enhances proteasomal degradation, this position is dephosphorylated by PTPN2. Polyubiquitinated. Exhibits a rapid proteasomal degradation with a half-life under 1 hour, ubiquitination depends on endoplasmic reticulum association.

The protein localises to the endoplasmic reticulum membrane. The protein resides in the mitochondrion outer membrane. Its function is as follows. Recruits the serine/threonine-protein phosphatase PPP1CA to prevents excessive phosphorylation of the translation initiation factor eIF-2A/EIF2S1, thereby reversing the shut-off of protein synthesis initiated by stress-inducible kinases and facilitating recovery of cells from stress. Down-regulates the TGF-beta signaling pathway by promoting dephosphorylation of TGFB1 by PP1. May promote apoptosis by inducing p53/TP53 phosphorylation on 'Ser-15'. Plays an essential role in autophagy by tuning translation during starvation, thus enabling lysosomal biogenesis and a sustained autophagic flux. Also acts a viral restriction factor by attenuating HIV-1 replication. Mechanistically, mediates the inhibition of HIV-1 TAR RNA-mediated translation. Functionally, (Microbial infection) Promotes enterovirus 71 replication by mediating the internal ribosome entry site (IRES) activity of viral 5'-UTR. The sequence is that of Protein phosphatase 1 regulatory subunit 15A (PPP1R15A) from Homo sapiens (Human).